A 316-amino-acid polypeptide reads, in one-letter code: Transaldolase (316 aa).

The active-site Schiff-base intermediate with substrate is lysine 126.

Belongs to the transaldolase family. Type 1 subfamily. Homodimer.

It is found in the cytoplasm. It carries out the reaction D-sedoheptulose 7-phosphate + D-glyceraldehyde 3-phosphate = D-erythrose 4-phosphate + beta-D-fructose 6-phosphate. Its pathway is carbohydrate degradation; pentose phosphate pathway; D-glyceraldehyde 3-phosphate and beta-D-fructose 6-phosphate from D-ribose 5-phosphate and D-xylulose 5-phosphate (non-oxidative stage): step 2/3. Functionally, transaldolase is important for the balance of metabolites in the pentose-phosphate pathway. The sequence is that of Transaldolase from Methylibium petroleiphilum (strain ATCC BAA-1232 / LMG 22953 / PM1).